Consider the following 131-residue polypeptide: Heterochromatin silencing protein rss1 (131 aa).

As to quaternary structure, monomer.

The protein localises to the cytoplasm. It localises to the nucleus. Functionally, required for heterochromatin silencing within pericentromeric repeats and at telomers. Facilitates the recruitment of Clr6 histone deacetylase (HDAC) by interacting with histones. Also interacts with Rad25, which mediates heterochromatin silencing in DNA repeats by recruiting the RITS complex. Together with Rad25, forms a regulatory hub that defines heterochromatin silencing within tandem repeats via linking RNAi and HDAC. In Schizosaccharomyces pombe (strain 972 / ATCC 24843) (Fission yeast), this protein is Heterochromatin silencing protein rss1 (rss1).